Here is a 161-residue protein sequence, read N- to C-terminus: Ribonuclease H (161 aa).

The region spanning 12–155 (QPQHVVIYTD…ADALANKGVE (144 aa)) is the RNase H type-1 domain. Mg(2+) is bound by residues Asp-21, Glu-59, Asp-81, and Asp-147.

It belongs to the RNase H family. In terms of assembly, monomer. The cofactor is Mg(2+).

The protein localises to the cytoplasm. The catalysed reaction is Endonucleolytic cleavage to 5'-phosphomonoester.. Endonuclease that specifically degrades the RNA of RNA-DNA hybrids. The polypeptide is Ribonuclease H (Polaromonas naphthalenivorans (strain CJ2)).